The primary structure comprises 429 residues: Histidine--tRNA ligase (429 aa).

Belongs to the class-II aminoacyl-tRNA synthetase family. As to quaternary structure, homodimer.

The protein localises to the cytoplasm. It carries out the reaction tRNA(His) + L-histidine + ATP = L-histidyl-tRNA(His) + AMP + diphosphate + H(+). The protein is Histidine--tRNA ligase of Pseudomonas savastanoi pv. phaseolicola (strain 1448A / Race 6) (Pseudomonas syringae pv. phaseolicola (strain 1448A / Race 6)).